The primary structure comprises 87 residues: U3-theraphotoxin-Hhn1a 10 (87 aa).

The N-terminal stretch at 1 to 24 (MVNMEASMFLTFAGLVLLFVVCYA) is a signal peptide. A propeptide spanning residues 25 to 52 (SESEEKEFPKEMLSSIFAVDNDFKQEER) is cleaved from the precursor. 3 disulfides stabilise this stretch: cysteine 54–cysteine 67, cysteine 61–cysteine 72, and cysteine 66–cysteine 79.

The protein belongs to the neurotoxin 10 (Hwtx-1) family. 51 (Hntx-8) subfamily. Hntx-8 sub-subfamily. Expressed by the venom gland.

The protein resides in the secreted. Ion channel inhibitor. The chain is U3-theraphotoxin-Hhn1a 10 from Cyriopagopus hainanus (Chinese bird spider).